A 22-amino-acid polypeptide reads, in one-letter code: Rothein 4.1 (22 aa).

This sequence belongs to the frog skin active peptide (FSAP) family. Rothein subfamily. In terms of tissue distribution, expressed by the skin dorsal glands.

The protein resides in the secreted. Functionally, lacks antimicrobial activity. Does not inhibit the formation of NO by neuronal nitric oxide. This chain is Rothein 4.1, found in Litoria rothii (Roth's tree frog).